The following is a 184-amino-acid chain: UPF0301 protein Sden_2674 (184 aa).

The protein belongs to the UPF0301 (AlgH) family.

This is UPF0301 protein Sden_2674 from Shewanella denitrificans (strain OS217 / ATCC BAA-1090 / DSM 15013).